A 556-amino-acid polypeptide reads, in one-letter code: 2-succinyl-5-enolpyruvyl-6-hydroxy-3-cyclohexene-1-carboxylate synthase (556 aa).

The protein belongs to the TPP enzyme family. MenD subfamily. Homodimer. Mg(2+) is required as a cofactor. It depends on Mn(2+) as a cofactor. Thiamine diphosphate serves as cofactor.

The enzyme catalyses isochorismate + 2-oxoglutarate + H(+) = 5-enolpyruvoyl-6-hydroxy-2-succinyl-cyclohex-3-ene-1-carboxylate + CO2. Its pathway is quinol/quinone metabolism; 1,4-dihydroxy-2-naphthoate biosynthesis; 1,4-dihydroxy-2-naphthoate from chorismate: step 2/7. The protein operates within quinol/quinone metabolism; menaquinone biosynthesis. In terms of biological role, catalyzes the thiamine diphosphate-dependent decarboxylation of 2-oxoglutarate and the subsequent addition of the resulting succinic semialdehyde-thiamine pyrophosphate anion to isochorismate to yield 2-succinyl-5-enolpyruvyl-6-hydroxy-3-cyclohexene-1-carboxylate (SEPHCHC). The chain is 2-succinyl-5-enolpyruvyl-6-hydroxy-3-cyclohexene-1-carboxylate synthase from Klebsiella pneumoniae (strain 342).